The chain runs to 260 residues: Putative ABC transporter ATP-binding protein PF0068 (260 aa).

The region spanning 2-234 (IEVKGVWFWY…DLKRYKLEEP (233 aa)) is the ABC transporter domain. ATP is bound at residue 34 to 41 (GPNGSGKT).

This sequence belongs to the ABC transporter superfamily.

The protein resides in the cell membrane. Its function is as follows. Probably part of an ABC transporter complex. Responsible for energy coupling to the transport system. The sequence is that of Putative ABC transporter ATP-binding protein PF0068 from Pyrococcus furiosus (strain ATCC 43587 / DSM 3638 / JCM 8422 / Vc1).